Here is a 477-residue protein sequence, read N- to C-terminus: Ubiquinone biosynthesis monooxygenase COQ6, mitochondrial (477 aa).

The N-terminal 25 residues, 1–25 (MLGVLRIQGALASAGQARLLSVRLL), are a transit peptide targeting the mitochondrion.

The protein belongs to the UbiH/COQ6 family. As to quaternary structure, component of a multi-subunit COQ enzyme complex. FAD is required as a cofactor.

The protein resides in the mitochondrion inner membrane. The enzyme catalyses a 4-hydroxy-3-(all-trans-polyprenyl)benzoate + 2 reduced [2Fe-2S]-[ferredoxin] + O2 + 2 H(+) = a 3,4-dihydroxy-5-(all-trans-polyprenyl)benzoate + 2 oxidized [2Fe-2S]-[ferredoxin] + H2O. It carries out the reaction a 2-methoxy-6-(all-trans-polyprenyl)phenol + 2 reduced [2Fe-2S]-[ferredoxin] + O2 + 2 H(+) = a 2-methoxy-6-(all-trans-polyprenyl)benzene-1,4-diol + 2 oxidized [2Fe-2S]-[ferredoxin] + H2O. Its pathway is cofactor biosynthesis; ubiquinone biosynthesis. Functionally, FAD-dependent monooxygenase required for two non-consecutive steps during ubiquinone biosynthesis. Required for the C5-ring hydroxylation during ubiquinone biosynthesis by catalyzing the hydroxylation of 4-hydroxy-3-(all-trans-polyprenyl)benzoic acid to 3,4-dihydroxy-5-(all-trans-polyprenyl)benzoic acid. Also acts downstream of coq4, for the C1-hydroxylation during ubiquinone biosynthesis by catalyzing the hydroxylation of 2-methoxy-6-(all-trans-polyprenyl)phenol to 2-methoxy-6-(all-trans-polyprenyl)benzene-1,4-diol. The electrons required for the hydroxylation reaction are funneled indirectly to Coq6 from NADPH via a ferredoxin/ferredoxin reductase system. This chain is Ubiquinone biosynthesis monooxygenase COQ6, mitochondrial, found in Drosophila melanogaster (Fruit fly).